The chain runs to 467 residues: Gamma-aminobutyric acid receptor subunit gamma-3 (467 aa).

An N-terminal signal peptide occupies residues 1 to 17 (MAPKLLLLLCLFSGLHA). Over 18 to 256 (RSRKVEEDEY…FELSRRMGYF (239 aa)) the chain is Extracellular. Asparagine 110 carries an N-linked (GlcNAc...) asparagine glycan. Residues cysteine 171 and cysteine 185 are joined by a disulfide bond. N-linked (GlcNAc...) asparagine glycosylation occurs at asparagine 228. The helical transmembrane segment at 257–277 (TIQTYIPCILTVVLSWVSFWI) threads the bilayer. At 278 to 283 (KKDATP) the chain is on the cytoplasmic side. The chain crosses the membrane as a helical span at residues 284-303 (ARTALGITTVLTMTTLSTIA). Residues 304–311 (RKSLPRVS) lie on the Extracellular side of the membrane. A helical membrane pass occupies residues 312–332 (YVTAMDLFVTVCFLFVFAALM). Over 333-446 (EYATLNYYSS…DILELDSYSR (114 aa)) the chain is Cytoplasmic. Residues 447 to 467 (VFFPTSFLLFNLVYWVGYLYL) traverse the membrane as a helical segment.

It belongs to the ligand-gated ion channel (TC 1.A.9) family. Gamma-aminobutyric acid receptor (TC 1.A.9.5) subfamily. GABRG3 sub-subfamily. In terms of assembly, heteropentamer, formed by a combination of alpha (GABRA1-6), beta (GABRB1-3), gamma (GABRG1-3), delta (GABRD), epsilon (GABRE), rho (GABRR1-3), pi (GABRP) and theta (GABRQ) chains, each subunit exhibiting distinct physiological and pharmacological properties. May be palmitoylated. Expressed in brain.

It localises to the postsynaptic cell membrane. Its subcellular location is the cell membrane. The catalysed reaction is chloride(in) = chloride(out). Gamma subunit of the heteropentameric ligand-gated chloride channel gated by gamma-aminobutyric acid (GABA), a major inhibitory neurotransmitter in the brain. GABA-gated chloride channels, also named GABA(A) receptors (GABAAR), consist of five subunits arranged around a central pore and contain GABA active binding site(s) located at the alpha and beta subunit interface(s). When activated by GABA, GABAARs selectively allow the flow of chloride across the cell membrane down their electrochemical gradient. The polypeptide is Gamma-aminobutyric acid receptor subunit gamma-3 (Homo sapiens (Human)).